A 166-amino-acid chain; its full sequence is Disulfide bond formation protein B (166 aa).

At 1–11 the chain is on the cytoplasmic side; that stretch reads MCNKLFAGRRG. A helical membrane pass occupies residues 12-28; the sequence is YFLGFVASFGLVGLALF. Residues 29–46 lie on the Periplasmic side of the membrane; it reads LQQKYNLEPCPLCISQRI. C38 and C41 are joined by a disulfide. Residues 47 to 63 traverse the membrane as a helical segment; it reads AFMALGILFLLAALHNP. Residues 64 to 69 lie on the Cytoplasmic side of the membrane; it reads GRVGRK. A helical transmembrane segment spans residues 70–87; the sequence is VYGLLHVIAAATGIGIAA. At 88 to 144 the chain is on the periplasmic side; the sequence is RHIWIQANPDKVMAECGAGFDYIMETFPLKKALDLIFKGTGECSAIDWTLFGLTIPQ. C103 and C130 are joined by a disulfide. Residues 145 to 163 traverse the membrane as a helical segment; the sequence is LSLIAFVGLGLFAVLLAFH. The Cytoplasmic segment spans residues 164–166; sequence KKA.

The protein belongs to the DsbB family.

It localises to the cell inner membrane. Functionally, required for disulfide bond formation in some periplasmic proteins. Acts by oxidizing the DsbA protein. The polypeptide is Disulfide bond formation protein B (Methylobacillus flagellatus (strain ATCC 51484 / DSM 6875 / VKM B-1610 / KT)).